The sequence spans 532 residues: Glucan synthesis regulatory protein (532 aa).

Residues 374 to 532 (TANKRKSMAP…DAEDMKDIEI (159 aa)) form a disordered region. Over residues 381–393 (MAPSMASASGMRS) the composition is skewed to low complexity. Residues 447–457 (PTTSLTASNAS) are compositionally biased toward polar residues. Residues 475-516 (SGEHSKEDIKVNEDSPAKERTSEDKEKKPETEANGKATESKG) are compositionally biased toward basic and acidic residues.

The protein belongs to the KNR4/SMI1 family.

Its function is as follows. Involved in the regulation of 1,3-beta-glucan synthase activity and cell-wall formation. This chain is Glucan synthesis regulatory protein (cot-2), found in Neurospora crassa (strain ATCC 24698 / 74-OR23-1A / CBS 708.71 / DSM 1257 / FGSC 987).